Reading from the N-terminus, the 85-residue chain is Large ribosomal subunit protein bL27 (85 aa).

This sequence belongs to the bacterial ribosomal protein bL27 family.

The chain is Large ribosomal subunit protein bL27 from Leptospira biflexa serovar Patoc (strain Patoc 1 / Ames).